The sequence spans 112 residues: Nitrogenase-stabilizing/protective protein NifW (112 aa).

This sequence belongs to the NifW family. Homotrimer; associates with NifD.

In terms of biological role, may protect the nitrogenase Fe-Mo protein from oxidative damage. The protein is Nitrogenase-stabilizing/protective protein NifW of Paraburkholderia xenovorans (strain LB400).